A 156-amino-acid polypeptide reads, in one-letter code: Small ribosomal subunit protein uS7 (156 aa).

It belongs to the universal ribosomal protein uS7 family. Part of the 30S ribosomal subunit. Contacts proteins S9 and S11.

One of the primary rRNA binding proteins, it binds directly to 16S rRNA where it nucleates assembly of the head domain of the 30S subunit. Is located at the subunit interface close to the decoding center, probably blocks exit of the E-site tRNA. This Leptothrix cholodnii (strain ATCC 51168 / LMG 8142 / SP-6) (Leptothrix discophora (strain SP-6)) protein is Small ribosomal subunit protein uS7.